Consider the following 133-residue polypeptide: Napin-1 (133 aa).

Propeptides lie at residues 31-49 (PSWTLDGEFDFEDDMEKQG) and 131-133 (PSY).

Belongs to the 2S seed storage albumins family. In terms of assembly, the mature protein consists of a small and a large chain linked by disulfide bonds. In terms of tissue distribution, cotyledons and the axis.

Functionally, the small, basic, water-soluble napins are one of the two major kinds of storage proteins synthesized in the seed during its maturation. This chain is Napin-1, found in Brassica napus (Rape).